The chain runs to 705 residues: Beta-xylosidase (705 aa).

The protein belongs to the glycosyl hydrolase 52 family.

It catalyses the reaction Hydrolysis of (1-&gt;4)-beta-D-xylans, to remove successive D-xylose residues from the non-reducing termini.. The protein operates within glycan degradation; xylan degradation. In Geobacillus stearothermophilus (Bacillus stearothermophilus), this protein is Beta-xylosidase (xylA).